Here is a 554-residue protein sequence, read N- to C-terminus: CTP synthase (554 aa).

The amidoligase domain stretch occupies residues 1–265; it reads MTPLIFVTGG…DEIVVNQLKL (265 aa). Ser-13 contacts CTP. Position 13 (Ser-13) interacts with UTP. ATP-binding positions include 14–19 and Asp-71; that span reads SLGKGI. Mg(2+) contacts are provided by Asp-71 and Glu-139. CTP-binding positions include 146–148, 186–191, and Lys-222; these read DIE and KTKPTQ. UTP contacts are provided by residues 186 to 191 and Lys-222; that span reads KTKPTQ. The Glutamine amidotransferase type-1 domain occupies 292-545; that stretch reads TIAVVGKYVD…IRAARERKAG (254 aa). Gly-353 contacts L-glutamine. The active-site Nucleophile; for glutamine hydrolysis is Cys-380. L-glutamine is bound by residues 381–384, Glu-404, and Arg-471; that span reads YGMQ. Residues His-518 and Glu-520 contribute to the active site.

This sequence belongs to the CTP synthase family. In terms of assembly, homotetramer.

It carries out the reaction UTP + L-glutamine + ATP + H2O = CTP + L-glutamate + ADP + phosphate + 2 H(+). The catalysed reaction is L-glutamine + H2O = L-glutamate + NH4(+). The enzyme catalyses UTP + NH4(+) + ATP = CTP + ADP + phosphate + 2 H(+). It functions in the pathway pyrimidine metabolism; CTP biosynthesis via de novo pathway; CTP from UDP: step 2/2. Allosterically activated by GTP, when glutamine is the substrate; GTP has no effect on the reaction when ammonia is the substrate. The allosteric effector GTP functions by stabilizing the protein conformation that binds the tetrahedral intermediate(s) formed during glutamine hydrolysis. Inhibited by the product CTP, via allosteric rather than competitive inhibition. In terms of biological role, catalyzes the ATP-dependent amination of UTP to CTP with either L-glutamine or ammonia as the source of nitrogen. Regulates intracellular CTP levels through interactions with the four ribonucleotide triphosphates. This Stenotrophomonas maltophilia (strain R551-3) protein is CTP synthase.